A 301-amino-acid chain; its full sequence is Phosphatidylserine decarboxylase proenzyme (301 aa).

Residues Asp-117, His-173, and Ser-260 each act as charge relay system; for autoendoproteolytic cleavage activity in the active site. Residue Ser-260 is the Schiff-base intermediate with substrate; via pyruvic acid; for decarboxylase activity of the active site. Residue Ser-260 is modified to Pyruvic acid (Ser); by autocatalysis.

It belongs to the phosphatidylserine decarboxylase family. PSD-B subfamily. Prokaryotic type II sub-subfamily. In terms of assembly, heterodimer of a large membrane-associated beta subunit and a small pyruvoyl-containing alpha subunit. Pyruvate serves as cofactor. In terms of processing, is synthesized initially as an inactive proenzyme. Formation of the active enzyme involves a self-maturation process in which the active site pyruvoyl group is generated from an internal serine residue via an autocatalytic post-translational modification. Two non-identical subunits are generated from the proenzyme in this reaction, and the pyruvate is formed at the N-terminus of the alpha chain, which is derived from the carboxyl end of the proenzyme. The autoendoproteolytic cleavage occurs by a canonical serine protease mechanism, in which the side chain hydroxyl group of the serine supplies its oxygen atom to form the C-terminus of the beta chain, while the remainder of the serine residue undergoes an oxidative deamination to produce ammonia and the pyruvoyl prosthetic group on the alpha chain. During this reaction, the Ser that is part of the protease active site of the proenzyme becomes the pyruvoyl prosthetic group, which constitutes an essential element of the active site of the mature decarboxylase.

The protein resides in the cell membrane. It catalyses the reaction a 1,2-diacyl-sn-glycero-3-phospho-L-serine + H(+) = a 1,2-diacyl-sn-glycero-3-phosphoethanolamine + CO2. It functions in the pathway phospholipid metabolism; phosphatidylethanolamine biosynthesis; phosphatidylethanolamine from CDP-diacylglycerol: step 2/2. Catalyzes the formation of phosphatidylethanolamine (PtdEtn) from phosphatidylserine (PtdSer). This chain is Phosphatidylserine decarboxylase proenzyme, found in Chlamydia trachomatis serovar L2b (strain UCH-1/proctitis).